The chain runs to 85 residues: ATP synthase subunit c (85 aa).

2 helical membrane-spanning segments follow: residues 19–39 (LGAA…IGKI) and 62–82 (IIAA…CLLV).

This sequence belongs to the ATPase C chain family. F-type ATPases have 2 components, F(1) - the catalytic core - and F(0) - the membrane proton channel. F(1) has five subunits: alpha(3), beta(3), gamma(1), delta(1), epsilon(1). F(0) has three main subunits: a(1), b(2) and c(10-14). The alpha and beta chains form an alternating ring which encloses part of the gamma chain. F(1) is attached to F(0) by a central stalk formed by the gamma and epsilon chains, while a peripheral stalk is formed by the delta and b chains.

The protein resides in the cell inner membrane. F(1)F(0) ATP synthase produces ATP from ADP in the presence of a proton or sodium gradient. F-type ATPases consist of two structural domains, F(1) containing the extramembraneous catalytic core and F(0) containing the membrane proton channel, linked together by a central stalk and a peripheral stalk. During catalysis, ATP synthesis in the catalytic domain of F(1) is coupled via a rotary mechanism of the central stalk subunits to proton translocation. In terms of biological role, key component of the F(0) channel; it plays a direct role in translocation across the membrane. A homomeric c-ring of between 10-14 subunits forms the central stalk rotor element with the F(1) delta and epsilon subunits. This Bacteroides fragilis (strain ATCC 25285 / DSM 2151 / CCUG 4856 / JCM 11019 / LMG 10263 / NCTC 9343 / Onslow / VPI 2553 / EN-2) protein is ATP synthase subunit c.